Here is a 213-residue protein sequence, read N- to C-terminus: MFFQPLNALSLCASLSSFSSSTLTSFAFISGTLSSFALCFNSMPFSSATLLISSSTLSLSTSMASEFTPISSYTLTLVSKSSNCCSNLSIIMVICWRFIFCNALSMPLQTCPIDADTCLIVTAVCTLDATESTRDANFNSCNLSFFFLIALDAYIRDISSFSLRARLSLLVSCFSSFEALLACFCNCFDVNFSWKRVFSKPAAELRDISQCDV.

This is an uncharacterized protein from Saccharomyces cerevisiae (strain ATCC 204508 / S288c) (Baker's yeast).